We begin with the raw amino-acid sequence, 449 residues long: Putative glycosyltransferase 7 (449 aa).

Topologically, residues 1–32 (MVSPETSSSHYQSSPMAKYAGTRTRPVVCISD) are cytoplasmic. A helical; Signal-anchor for type II membrane protein transmembrane segment spans residues 33–53 (VVLFLGGAFMSLILVWSFFSF). Residues 54–449 (SSISPNLTVK…VPFDYPDEPW (396 aa)) lie on the Lumenal side of the membrane. N-linked (GlcNAc...) asparagine glycosylation is found at N59, N123, and N332.

This sequence belongs to the glycosyltransferase 34 family.

It is found in the golgi apparatus membrane. Its function is as follows. Probable glycosyltransferase that may be involved in the biosynthesis of xyloglucan. This chain is Putative glycosyltransferase 7 (GT7), found in Arabidopsis thaliana (Mouse-ear cress).